Reading from the N-terminus, the 235-residue chain is Large ribosomal subunit protein uL1 (235 aa).

This sequence belongs to the universal ribosomal protein uL1 family. As to quaternary structure, part of the 50S ribosomal subunit.

In terms of biological role, binds directly to 23S rRNA. The L1 stalk is quite mobile in the ribosome, and is involved in E site tRNA release. Functionally, protein L1 is also a translational repressor protein, it controls the translation of the L11 operon by binding to its mRNA. The protein is Large ribosomal subunit protein uL1 of Solidesulfovibrio magneticus (strain ATCC 700980 / DSM 13731 / RS-1) (Desulfovibrio magneticus).